The sequence spans 844 residues: Striatin-interacting proteins 2 (844 aa).

Positions 1–18 (MDDPAAPGPAGSPANDNG) are enriched in low complexity. The tract at residues 1–58 (MDDPAAPGPAGSPANDNGNGNGNGNGNGNGGKGKPAVPKGRETFRNQRRESEGSVDCP) is disordered. The segment covering 19-33 (NGNGNGNGNGNGGKG) has biased composition (gly residues). Over residues 39–52 (KGRETFRNQRRESE) the composition is skewed to basic and acidic residues. Residues S328, S339, and S364 each carry the phosphoserine modification. The interval 331–355 (SYTLDLGESQLAPPPSKLRGRRGSR) is disordered. The disordered stretch occupies residues 370–422 (ERDLFKTEEPATEEEEESAADGERTLDGELDLLEQDPLVPPPPSQTPLSTDRV). The span at 379–389 (PATEEEEESAA) shows a compositional bias: acidic residues.

It belongs to the STRIP family. As to quaternary structure, part of the core of STRIPAK complexes composed of PP2A catalytic and scaffolding subunits, the striatins (PP2A regulatory subunits), the striatin-associated proteins MOB4, STRIP1 and STRIP2, PDCD10 and members of the STE20 kinases, such as STK24 and STK26. Interacts with CTTNBP2NL.

Its subcellular location is the cytoplasm. Plays a role in the regulation of cell morphology and cytoskeletal organization. Required in the control of cell shape. Calmodulin-binding scaffolding protein which is the center of the striatin-interacting phosphatase and kinase (STRIPAK) complexes. STRIPAK complexes have critical roles in protein (de)phosphorylation and are regulators of multiple signaling pathways including Hippo, MAPK, nuclear receptor and cytoskeleton remodeling. Different types of STRIPAK complexes are involved in a variety of biological processes such as cell growth, differentiation, apoptosis, metabolism and immune regulation. The chain is Striatin-interacting proteins 2 (Strip2) from Mus musculus (Mouse).